Here is a 288-residue protein sequence, read N- to C-terminus: Oxaloacetate decarboxylase (288 aa).

Ser47 provides a ligand contact to substrate. A Mg(2+)-binding site is contributed by Asp85. Positions 156 and 232 each coordinate substrate.

The protein belongs to the isocitrate lyase/PEP mutase superfamily. Oxaloacetate decarboxylase family. In terms of assembly, homotetramer; dimer of dimers. Requires Mg(2+) as cofactor.

The enzyme catalyses oxaloacetate + H(+) = pyruvate + CO2. Functionally, catalyzes the decarboxylation of oxaloacetate into pyruvate. Seems to play a role in maintaining cellular concentrations of bicarbonate and pyruvate. The protein is Oxaloacetate decarboxylase of Rhodopseudomonas palustris (strain BisB18).